Here is a 140-residue protein sequence, read N- to C-terminus: Putative pre-16S rRNA nuclease (140 aa).

The protein belongs to the YqgF nuclease family.

Its subcellular location is the cytoplasm. Could be a nuclease involved in processing of the 5'-end of pre-16S rRNA. The sequence is that of Putative pre-16S rRNA nuclease from Moorella thermoacetica (strain ATCC 39073 / JCM 9320).